Reading from the N-terminus, the 223-residue chain is Cell division protein SepF (223 aa).

The segment at 19 to 81 (YDDEYYDDRG…YPPPGGYRGG (63 aa)) is disordered. Residues 36–69 (PRFEDDYGRYEGRDFEDPRRDPRAGMRADLRGEP) show a composition bias toward basic and acidic residues.

This sequence belongs to the SepF family. Homodimer. Interacts with FtsZ.

It is found in the cytoplasm. In terms of biological role, cell division protein that is part of the divisome complex and is recruited early to the Z-ring. Probably stimulates Z-ring formation, perhaps through the cross-linking of FtsZ protofilaments. Its function overlaps with FtsA. The chain is Cell division protein SepF from Mycobacterium ulcerans (strain Agy99).